Here is a 396-residue protein sequence, read N- to C-terminus: Putative F-box protein At4g22660 (396 aa).

The F-box domain occupies 7–58 (PNTWSDLPLDLLNLVFKRLSFANFRQAKSVCSSWYSASKQSVPKNQIPWLML).

The sequence is that of Putative F-box protein At4g22660 from Arabidopsis thaliana (Mouse-ear cress).